We begin with the raw amino-acid sequence, 536 residues long: Membrane protein insertase YidC (536 aa).

Helical transmembrane passes span 7-27, 332-352, 411-431, 449-469, and 488-508; these read LLVMGLLLVSFLIFTQWQQDF, FWLLIFIHSIIGNWGLAIMGV, MGGCLPLILQMPIFIALYWTF, LSAQDPYYIFPVLMGLSMFLL, and FMPVIFTVFFLWFPSGLVLYW.

This sequence belongs to the OXA1/ALB3/YidC family. Type 1 subfamily. As to quaternary structure, interacts with the Sec translocase complex via SecD. Specifically interacts with transmembrane segments of nascent integral membrane proteins during membrane integration.

It localises to the cell inner membrane. Functionally, required for the insertion and/or proper folding and/or complex formation of integral membrane proteins into the membrane. Involved in integration of membrane proteins that insert both dependently and independently of the Sec translocase complex, as well as at least some lipoproteins. Aids folding of multispanning membrane proteins. The sequence is that of Membrane protein insertase YidC from Haemophilus ducreyi (strain 35000HP / ATCC 700724).